Reading from the N-terminus, the 489-residue chain is MSSQEIFKKYEQKVVEYQDHIEELKSTKNDYKQLIDTLQHLPDTLQPKIMVPMGKLAFFEGNLKNTNEILILLGDNYFAKRSSKQTIDIIQRRDKDIDTSINDLREQIKGLKQRVSMTTDLSKALHEKEYDNIVEIKEEYNSDEEREKEKKRKQKPQKSTTTTTTTTTSKDKPKTEEEKKKSKEMDEEFDKMLKRLSILEEKENKMGDDYDEEEFNKKFNKKLDITGSDEEYDDDNYNNNNDDDDDNDEDDDREYYQEEGFEDEKPENSNYNKNIEEDDHDDDDDYYDEGEEIVEYYDENGNIVDINDPNVEYIQGDDDNDDNDNEEDEVDVELNESELEEIKDFHMDKKGQDLSEKEVKELTDFYHSKQKKRISYIDTPQPPTPEATTSITPKSILKTNSSGNLMSTIPKSYNENDENDIRRYIKNLDKQEKFENQKTISVPNPPKDVAFSGDIVEKETDLFPFDEIPKPTPPSNAKQSRFKSSRQNK.

Disordered regions lie at residues N141–E188, E200–E329, I396–E415, and F434–K489. Low complexity predominate over residues Q157–T168. Basic and acidic residues-rich tracts occupy residues S169 to E188 and F215 to D224. Composition is skewed to acidic residues over residues G227–K265, E276–D298, and Q315–E329. Over residues I396–Y413 the composition is skewed to polar residues. Positions S480–K489 are enriched in basic residues.

Belongs to the RNA polymerase II subunit 5-mediating protein family.

It localises to the nucleus. This Dictyostelium discoideum (Social amoeba) protein is RNA polymerase II subunit 5-mediating protein homolog (rmp).